The sequence spans 284 residues: Lipoyl synthase (284 aa).

The [4Fe-4S] cluster site is built by cysteine 38, cysteine 43, cysteine 49, cysteine 64, cysteine 68, cysteine 71, and serine 277. The Radical SAM core domain occupies 50–266 (WSRGTATFLL…RDEALGMGFS (217 aa)).

Belongs to the radical SAM superfamily. Lipoyl synthase family. [4Fe-4S] cluster is required as a cofactor.

The protein resides in the cytoplasm. It carries out the reaction [[Fe-S] cluster scaffold protein carrying a second [4Fe-4S](2+) cluster] + N(6)-octanoyl-L-lysyl-[protein] + 2 oxidized [2Fe-2S]-[ferredoxin] + 2 S-adenosyl-L-methionine + 4 H(+) = [[Fe-S] cluster scaffold protein] + N(6)-[(R)-dihydrolipoyl]-L-lysyl-[protein] + 4 Fe(3+) + 2 hydrogen sulfide + 2 5'-deoxyadenosine + 2 L-methionine + 2 reduced [2Fe-2S]-[ferredoxin]. It functions in the pathway protein modification; protein lipoylation via endogenous pathway; protein N(6)-(lipoyl)lysine from octanoyl-[acyl-carrier-protein]: step 2/2. Catalyzes the radical-mediated insertion of two sulfur atoms into the C-6 and C-8 positions of the octanoyl moiety bound to the lipoyl domains of lipoate-dependent enzymes, thereby converting the octanoylated domains into lipoylated derivatives. The protein is Lipoyl synthase of Chlorobium phaeovibrioides (strain DSM 265 / 1930) (Prosthecochloris vibrioformis (strain DSM 265)).